A 96-amino-acid polypeptide reads, in one-letter code: MSAVTPLLDGLALRLYIQPKASRDQIVGLHGDELKVAITAPPVDGQANAHLIKFIAKQFRVAKSQVIIEKGELGRHKQIKIVNPQQIPPEVATLLE.

The protein belongs to the UPF0235 family.

This Yersinia enterocolitica serotype O:8 / biotype 1B (strain NCTC 13174 / 8081) protein is UPF0235 protein YE3436.